We begin with the raw amino-acid sequence, 185 residues long: Protein C2-DOMAIN ABA-RELATED 9 (185 aa).

The C2 domain occupies 1-104; that stretch reads MEDKPLGILR…LEAHQMELDF (104 aa). Ca(2+)-binding residues include Arg-22, Asp-23, Asp-28, Asp-74, Lys-75, Asp-76, and Asp-82.

This sequence belongs to the plant CAR protein family. As to quaternary structure, binds to PYR/PYL/RCAR abscisic acid intracellular receptors in an ABA-independent manner, both at the plasma membrane and in the nucleus. Interacts with LOT1 in the nuleus; this interaction is repressed by abscisic acid (ABA) and is sensitive to calcium ion Ca(2+), leading to free CAR9 accumulation at the plasma membrane. It depends on Ca(2+) as a cofactor.

It localises to the cell membrane. Its subcellular location is the nucleus. Functionally, stimulates the GTPase/ATPase activities of Obg-like ATPases. Mediates the transient calcium-dependent interaction of PYR/PYL/RCAR abscisic acid (ABA) receptors with the plasma membrane and thus regulates ABA sensitivity. In Arabidopsis thaliana (Mouse-ear cress), this protein is Protein C2-DOMAIN ABA-RELATED 9.